Consider the following 552-residue polypeptide: Cholesterol oxidase (552 aa).

A signal peptide (tat-type signal) is located at residues 1–45 (MTDSRANRADATRGVASVSRRRFLAGAGLTAGAIALSSMSTSASA). Tyr66, Gly67, Glu86, Gly160, Asn164, Gly165, Met167, and Val295 together coordinate FAD. Catalysis depends on proton acceptor residues Glu406 and His492. Residues Gly520 and Phe532 each contribute to the FAD site.

Belongs to the GMC oxidoreductase family. Requires FAD as cofactor. In terms of processing, predicted to be exported by the Tat system. The position of the signal peptide cleavage has been experimentally proven.

Its subcellular location is the secreted. It carries out the reaction cholesterol + O2 = cholest-5-en-3-one + H2O2. The enzyme catalyses cholest-5-en-3-one = cholest-4-en-3-one. The protein operates within steroid metabolism; cholesterol degradation. Its function is as follows. Bifunctional enzyme that catalyzes the oxidation and isomerization of cholesterol to cholestenone (cholest-4-en-3-one), an initial step in the cholesterol degradation process. The sequence is that of Cholesterol oxidase from Brevibacterium sterolicum.